The chain runs to 614 residues: Zinc finger protein 276 (614 aa).

Positions 1–46 (MKRDRLGRFLSPGIARQRGGSGGGCGSGRTRGRPSRSGGTSADGAA) are disordered. Gly residues predominate over residues 19–29 (GGSGGGCGSGR). The 87-residue stretch at 78–164 (GHCRLCHGKF…LQRVNVSPAG (87 aa)) folds into the ZAD domain. Residues Cys-80, Cys-83, Cys-137, and Cys-140 each coordinate Zn(2+). Residues 271 to 422 (RLAQNSESNP…PGPKPGWKKK (152 aa)) form a disordered region. Polar residues-rich tracts occupy residues 272–282 (LAQNSESNPTG) and 291–302 (RETQVGSETKTL). A compositionally biased stretch (acidic residues) spans 357 to 369 (SDLSEGDFLSEDE). A compositionally biased stretch (basic and acidic residues) spans 386–408 (YPEKKVSGKKSEGREAKRPEEPK). The span at 409-422 (IRKKPGPKPGWKKK) shows a compositional bias: basic residues. 5 C2H2-type zinc fingers span residues 434–458 (YKCP…IKEH), 465–490 (RPCP…KLIH), 496–518 (YICD…QMRH), 524–546 (LQCE…MTKH), and 554–577 (FACD…SMVH). A disordered region spans residues 588 to 614 (PLEAEPPPGPLSPSGTMEGQAVKPEPT).

In terms of tissue distribution, found in all the examined tissues, with highest levels in kidney, liver, lung, and spleen.

The protein localises to the nucleus. The protein resides in the chromosome. It is found in the centromere. It localises to the kinetochore. May be involved in transcriptional regulation. This chain is Zinc finger protein 276 (Znf276), found in Mus musculus (Mouse).